A 226-amino-acid polypeptide reads, in one-letter code: Ribonuclease 3 (226 aa).

The RNase III domain maps to 7-129; the sequence is LPRLCRTLSY…IIGAVYLDSD (123 aa). Residue E42 coordinates Mg(2+). Residue D46 is part of the active site. Residues D115 and E118 each contribute to the Mg(2+) site. Residue E118 is part of the active site. One can recognise a DRBM domain in the interval 156–226; that stretch reads DAKTLLQEHL…AAQVLELLKK (71 aa).

Belongs to the ribonuclease III family. In terms of assembly, homodimer. Mg(2+) is required as a cofactor.

The protein resides in the cytoplasm. It carries out the reaction Endonucleolytic cleavage to 5'-phosphomonoester.. Digests double-stranded RNA. Involved in the processing of primary rRNA transcript to yield the immediate precursors to the large and small rRNAs (23S and 16S). Processes some mRNAs, and tRNAs when they are encoded in the rRNA operon. Processes pre-crRNA and tracrRNA of type II CRISPR loci if present in the organism. The sequence is that of Ribonuclease 3 from Shewanella baltica (strain OS223).